Reading from the N-terminus, the 546-residue chain is E3 ubiquitin-protein ligase NEURL1B (546 aa).

One can recognise an NHR 1 domain in the interval 38–194 (APRFHAQAKG…ITDEVQLLES (157 aa)). Residue threonine 199 is modified to Phosphothreonine. The 155-residue stretch at 270–424 (ELRFHATRGP…GVAGQLRLLG (155 aa)) folds into the NHR 2 domain. The disordered stretch occupies residues 429-490 (SSETMTPSGS…FSAPEPTGSR (62 aa)). The span at 457–471 (SSSASESSLVTAPSS) shows a compositional bias: low complexity. An RING-type zinc finger spans residues 494–534 (CTVCFDSEVDTVIYTCGHMCLCHGCGLRLRRQARACCPICR).

Interacts with DLL1 and DLL4. In terms of tissue distribution, expressed in the limb buds and dorsal root ganglia. Expressed in brain and kidney and at low levels in the heart.

It localises to the cytoplasm. The enzyme catalyses S-ubiquitinyl-[E2 ubiquitin-conjugating enzyme]-L-cysteine + [acceptor protein]-L-lysine = [E2 ubiquitin-conjugating enzyme]-L-cysteine + N(6)-ubiquitinyl-[acceptor protein]-L-lysine.. It functions in the pathway protein modification; protein ubiquitination. E3 ubiquitin-protein ligase involved in regulation of the Notch pathway through influencing the stability and activity of several Notch ligands. In Mus musculus (Mouse), this protein is E3 ubiquitin-protein ligase NEURL1B (Neurl1b).